The chain runs to 210 residues: Insulin receptor (210 aa).

The Fibronectin type-III domain occupies 1 to 96 (VSNSSSQIIL…SQILKELEES (96 aa)). 3 N-linked (GlcNAc...) asparagine glycosylation sites follow: Asn-3, Asn-21, and Asn-68. Residues 55–78 (WSPPFESEDSQKHNQSEYEDSAGE) form a disordered region. Residues 103–111 (EDYLHNVVF) are insulin-binding. Positions 116–169 (TSSGTGAEDPRPSRKRRSLGDVGNVTVAVPTVAAFPNTSSTSTPTSPEEHRPFE) are disordered. At 133-210 (SLGDVGNVTV…EERCSVAAYV (78 aa)) the chain is on the extracellular side. A compositionally biased stretch (low complexity) spans 137–161 (VGNVTVAVPTVAAFPNTSSTSTPTS). N-linked (GlcNAc...) asparagine glycans are attached at residues Asn-139 and Asn-152. The cysteines at positions 195 and 204 are disulfide-linked.

The protein belongs to the protein kinase superfamily. Tyr protein kinase family. Insulin receptor subfamily. In terms of assembly, tetramer of 2 alpha and 2 beta chains linked by disulfide bonds. The alpha chains carry the insulin-binding regions, while the beta chains carry the kinase domain. Forms a hybrid receptor with IGF1R, the hybrid is a tetramer consisting of 1 alpha chain and 1 beta chain of INSR and 1 alpha chain and 1 beta chain of IGF1R. Interacts with SORBS1 but dissociates from it following insulin stimulation. Binds SH2B2. Activated form of INSR interacts (via phosphorylated Tyrosine) with the PTB/PID domains of IRS1 and SHC1. The sequences surrounding the phosphorylated NPXY motif contribute differentially to either IRS1 or SHC1 recognition. Interacts (via tyrosines in the C-terminus) with IRS2 (via PTB domain and 591-786 AA); the 591-786 would be the primary anchor of IRS2 to INSR while the PTB domain would have a stabilizing action on the interaction with INSR. Interacts with the SH2 domains of the 85 kDa regulatory subunit of PI3K (PIK3R1) in vitro, when autophosphorylated on tyrosine residues. Interacts with SOCS7. Interacts with SOCS3. Interacts with SOCS1. Interacts with CAV2 (tyrosine-phosphorylated form); the interaction is increased with 'Tyr-27'phosphorylation of CAV2. Interacts with ARRB2. Interacts with GRB10; this interaction blocks the association between IRS1/IRS2 and INSR, significantly reduces insulin-stimulated tyrosine phosphorylation of IRS1 and IRS2 and thus decreases insulin signaling. Interacts with GRB7. Interacts with PDPK1. Interacts with GRB14 (via BPS domain). Interacts (via subunit alpha) with ENPP1 (via 485-599 AA); this interaction blocks autophosphorylation. Interacts with PTPRE. Interacts with STAT5B (via SH2 domain). Interacts with PTPRF. Interacts with ATIC; ATIC together with PRKAA2/AMPK2 and HACD3/PTPLAD1 is proposed to be part of a signaling netwok regulating INSR autophosphorylation and endocytosis. Interacts with the insulin receptor SORL1; this interaction strongly increases its surface exposure, hence strengthens insulin signal reception. Interacts (tyrosine phosphorylated) with CCDC88A/GIV (via SH2-like region); binding requires autophosphorylation of the INSR C-terminal region. Interacts with GNAI3; the interaction is probably mediated by CCDC88A/GIV. Interacts with LMBRD1. Interacts (in response to insulin stimulation) with NCK1; this interaction may recruit PTPN1 to mediate INSR dephosphorylation. Post-translationally, after being transported from the endoplasmic reticulum to the Golgi apparatus, the single glycosylated precursor is further glycosylated and then cleaved, followed by its transport to the plasma membrane. Autophosphorylated on tyrosine residues in response to insulin. Dephosphorylated by PTPN1, PTPRE and PTPRF. Dephosphorylated by PTPN2; down-regulates insulin-induced signaling. In terms of processing, S-nitrosylation by BLVRB inhibits the receptor tyrosine kinase, thereby inhibiting insulin signaling.

The protein localises to the cell membrane. The protein resides in the late endosome. It is found in the lysosome. It carries out the reaction L-tyrosyl-[protein] + ATP = O-phospho-L-tyrosyl-[protein] + ADP + H(+). With respect to regulation, activated in response to insulin. Autophosphorylation activates the kinase activity. PTPN1, PTPRE and PTPRF dephosphorylate important tyrosine residues, thereby reducing INSR activity. Inhibited by ENPP1. GRB10 and GRB14 inhibit the catalytic activity of the INSR, they block access of substrates to the activated receptor. SOCS1 and SOCS3 act as negative regulators of INSR activity, they bind to the activated INRS and interfere with the phosphorylation of INSR substrates. In terms of biological role, receptor tyrosine kinase which mediates the pleiotropic actions of insulin. Binding of insulin leads to phosphorylation of several intracellular substrates, including, insulin receptor substrates (IRS1, 2, 3, 4), SHC, GAB1, CBL and other signaling intermediates. Each of these phosphorylated proteins serve as docking proteins for other signaling proteins that contain Src-homology-2 domains (SH2 domain) that specifically recognize different phosphotyrosine residues, including the p85 regulatory subunit of PI3K and SHP2. Phosphorylation of IRSs proteins lead to the activation of two main signaling pathways: the PI3K-AKT/PKB pathway, which is responsible for most of the metabolic actions of insulin, and the Ras-MAPK pathway, which regulates expression of some genes and cooperates with the PI3K pathway to control cell growth and differentiation. Binding of the SH2 domains of PI3K to phosphotyrosines on IRS1 leads to the activation of PI3K and the generation of phosphatidylinositol-(3, 4, 5)-triphosphate (PIP3), a lipid second messenger, which activates several PIP3-dependent serine/threonine kinases, such as PDPK1 and subsequently AKT/PKB. The net effect of this pathway is to produce a translocation of the glucose transporter SLC2A4/GLUT4 from cytoplasmic vesicles to the cell membrane to facilitate glucose transport. Moreover, upon insulin stimulation, activated AKT/PKB is responsible for: anti-apoptotic effect of insulin by inducing phosphorylation of BAD; regulates the expression of gluconeogenic and lipogenic enzymes by controlling the activity of the winged helix or forkhead (FOX) class of transcription factors. Another pathway regulated by PI3K-AKT/PKB activation is mTORC1 signaling pathway which regulates cell growth and metabolism and integrates signals from insulin. AKT mediates insulin-stimulated protein synthesis by phosphorylating TSC2 thereby activating mTORC1 pathway. The Ras/RAF/MAP2K/MAPK pathway is mainly involved in mediating cell growth, survival and cellular differentiation of insulin. Phosphorylated IRS1 recruits GRB2/SOS complex, which triggers the activation of the Ras/RAF/MAP2K/MAPK pathway. In addition to binding insulin, the insulin receptor can bind insulin-like growth factors (IGFI and IGFII). When present in a hybrid receptor with IGF1R, binds IGF1. In adipocytes, inhibits lipolysis. The polypeptide is Insulin receptor (INSR) (Macaca mulatta (Rhesus macaque)).